A 199-amino-acid chain; its full sequence is Phosphoheptose isomerase (199 aa).

Residues 36 to 198 enclose the SIS domain; it reads MAQCLLNEHK…DRKLIPSSED (163 aa). 51 to 53 is a substrate binding site; the sequence is NGG. Residues His60 and Glu64 each contribute to the Zn(2+) site. Substrate-binding positions include Glu64, 93–94, 119–121, Ser124, and Gln174; these read ND and STS. Zn(2+) contacts are provided by Gln174 and His182.

This sequence belongs to the SIS family. GmhA subfamily. In terms of assembly, homotetramer. Zn(2+) serves as cofactor.

The protein resides in the cytoplasm. It carries out the reaction 2 D-sedoheptulose 7-phosphate = D-glycero-alpha-D-manno-heptose 7-phosphate + D-glycero-beta-D-manno-heptose 7-phosphate. It participates in carbohydrate biosynthesis; D-glycero-D-manno-heptose 7-phosphate biosynthesis; D-glycero-alpha-D-manno-heptose 7-phosphate and D-glycero-beta-D-manno-heptose 7-phosphate from sedoheptulose 7-phosphate: step 1/1. In terms of biological role, catalyzes the isomerization of sedoheptulose 7-phosphate in D-glycero-D-manno-heptose 7-phosphate. This Coxiella burnetii (strain CbuK_Q154) (Coxiella burnetii (strain Q154)) protein is Phosphoheptose isomerase.